A 130-amino-acid chain; its full sequence is Small ribosomal subunit protein uS9 (130 aa).

The protein belongs to the universal ribosomal protein uS9 family.

This is Small ribosomal subunit protein uS9 from Yersinia pseudotuberculosis serotype O:1b (strain IP 31758).